The chain runs to 201 residues: Glycerol-3-phosphate acyltransferase (201 aa).

5 helical membrane-spanning segments follow: residues 4 to 24, 55 to 75, 80 to 100, 110 to 130, and 152 to 174; these read LVAA…LVLT, LATL…VWVL, MVPV…WLGF, IGTL…TWLV, and FALY…MGFY.

The protein belongs to the PlsY family. In terms of assembly, probably interacts with PlsX.

The protein localises to the cell inner membrane. It catalyses the reaction an acyl phosphate + sn-glycerol 3-phosphate = a 1-acyl-sn-glycero-3-phosphate + phosphate. Its pathway is lipid metabolism; phospholipid metabolism. Its function is as follows. Catalyzes the transfer of an acyl group from acyl-phosphate (acyl-PO(4)) to glycerol-3-phosphate (G3P) to form lysophosphatidic acid (LPA). This enzyme utilizes acyl-phosphate as fatty acyl donor, but not acyl-CoA or acyl-ACP. This Paramagnetospirillum magneticum (strain ATCC 700264 / AMB-1) (Magnetospirillum magneticum) protein is Glycerol-3-phosphate acyltransferase.